A 68-amino-acid polypeptide reads, in one-letter code: DNA gyrase inhibitor YacG (68 aa).

Positions 10, 13, 29, and 33 each coordinate Zn(2+).

It belongs to the DNA gyrase inhibitor YacG family. Interacts with GyrB. It depends on Zn(2+) as a cofactor.

Inhibits all the catalytic activities of DNA gyrase by preventing its interaction with DNA. Acts by binding directly to the C-terminal domain of GyrB, which probably disrupts DNA binding by the gyrase. In Haemophilus influenzae (strain PittGG), this protein is DNA gyrase inhibitor YacG.